A 225-amino-acid polypeptide reads, in one-letter code: MAAPTAAALSTLSTASVTSGKRFITSSFSLSFSSRPLATGVRAAGARAARRSAASASTVVATIAVGDKLPDATLSYFDPADGELKTVTVAELTAGRKAVLFAVPGAFTPTCSQKHLPGFIEKAGELHAKGVDAIACVSVNDAFVMRAWKESLGLGDADVLLLSDGNLELTRALGVEMDLSDKPMGLGVRSRRYALLADDGVVKVLNLEEGGAFTTSSAEEMLKAL.

A chloroplast-targeting transit peptide spans 1-42 (MAAPTAAALSTLSTASVTSGKRFITSSFSLSFSSRPLATGVR). The 163-residue stretch at 63 to 225 (IAVGDKLPDA…SSAEEMLKAL (163 aa)) folds into the Thioredoxin domain. Residue Cys-111 is the Cysteine sulfenic acid (-SOH) intermediate of the active site.

It belongs to the peroxiredoxin family. Prx5 subfamily. In terms of assembly, monomer.

It is found in the plastid. The protein resides in the chloroplast stroma. It catalyses the reaction [glutaredoxin]-dithiol + a hydroperoxide = [glutaredoxin]-disulfide + an alcohol + H2O. In terms of biological role, thiol-specific peroxidase that catalyzes the reduction of hydrogen peroxide and organic hydroperoxides to water and alcohols, respectively. Plays a role in cell protection against oxidative stress by detoxifying peroxides. May be involved in chloroplast redox homeostasis. The protein is Peroxiredoxin-2E-2, chloroplastic (PRXIIE-2) of Oryza sativa subsp. japonica (Rice).